Here is a 330-residue protein sequence, read N- to C-terminus: Low affinity immunoglobulin gamma Fc region receptor II (330 aa).

The signal sequence occupies residues 1–29 (MESNWTVHVFSRTLCHMLLWTAVLNLAAG). Topologically, residues 30–210 (THDLPKAVVK…QGPKSSRSLP (181 aa)) are extracellular. 2 consecutive Ig-like C2-type domains span residues 50-106 (EDTV…QTRL) and 131-189 (GETI…LGRT). 2 disulfide bridges follow: Cys-57/Cys-99 and Cys-138/Cys-182. Asn-65, Asn-92, Asn-166, and Asn-173 each carry an N-linked (GlcNAc...) asparagine glycan. Residues 211 to 231 (VLTIVAAVTGIAVAAIVIILV) traverse the membrane as a helical segment. Residues 232–330 (SLVYLKKKQV…ETEHDYQNHI (99 aa)) are Cytoplasmic-facing. The interval 261–330 (VGEYRQPSGG…ETEHDYQNHI (70 aa)) is disordered. At Tyr-290 the chain carries Phosphotyrosine. An ITIM motif motif is present at residues 307 to 312 (ITYSLL). Tyr-309 carries the phosphotyrosine; by SRC-type Tyr-kinases modification. Position 326 is a phosphotyrosine (Tyr-326).

As to quaternary structure, interacts with FGR. Interacts with LYN. Post-translationally, glycosylated. In terms of processing, when coaggregated to BCR, isoform IIB1 and isoform IIB1' become tyrosine phosphorylated and bind to the SH2 domains of the protein tyrosine phosphatase PTPC1. Phosphorylated by SRC-type Tyr-kinases such as LYN, BLK, FYN and SYK. In terms of tissue distribution, widely expressed by cells of hemopoietic origin. The isoforms are differentially expressed. Isoform IIB1 is preferentially expressed by cells of the lymphoid lineage, isoform IIB2 by cells of the myeloid lineage, and isoform IIB3 is released by macrophages and is present in the serum. Isoform IIB1' is expressed in myeloid and lymphoid cell lines, in normal spleen cells, and in resting or LPS-activated B-cells but is not detected in mesenteric lymph node cells.

Its subcellular location is the cell membrane. It localises to the cytoplasm. It is found in the cytoskeleton. The protein resides in the secreted. In terms of biological role, receptor for the Fc region of complexed immunoglobulins gamma. Low affinity receptor. Involved in a variety of effector and regulatory functions such as phagocytosis of antigen-antibody complexes from the circulation and modulation of antibody production by B-cells. Isoform IIB1 and isoform IIB1' form caps but fail to mediate endocytosis or phagocytosis. Isoform IIB2 can mediate the endocytosis of soluble immune complexes via clathrin-coated pits. Isoform IIB1 and isoform IIB2 can down-regulate B-cell, T-cell, and mast cell activation when coaggregated to B-cell receptors for AG (BCR), T-cell receptors for AG (TCR), and Fc receptors, respectively. The sequence is that of Low affinity immunoglobulin gamma Fc region receptor II (Fcgr2) from Mus musculus (Mouse).